The primary structure comprises 1464 residues: Glutamate receptor ionotropic, NMDA 2A (1464 aa).

The signal sequence occupies residues 1 to 22 (MGRVGYWTLLVLPALLVWRGPA). Topologically, residues 23–556 (PSAAAEKGPP…SAFLEPFSAS (534 aa)) are extracellular. A Zn(2+)-binding site is contributed by His44. The N-linked (GlcNAc...) asparagine glycan is linked to Asn75. The cysteines at positions 87 and 320 are disulfide-linked. Residues His128, Glu266, and Asp282 each coordinate Zn(2+). 4 N-linked (GlcNAc...) asparagine glycosylation sites follow: Asn340, Asn380, Asn443, and Asn444. Disulfide bonds link Cys429–Cys455 and Cys436–Cys456. L-glutamate is bound by residues Ser511, Thr513, and Arg518. Asn541 carries N-linked (GlcNAc...) asparagine glycosylation. Residues 557 to 576 (VWVMMFVMLLIVSAIAVFVF) traverse the membrane as a helical segment. The Cytoplasmic segment spans residues 577–600 (EYFSPVGYNRNLAKGKAPHGPSFT). The segment at 599 to 620 (FTIGKAIWLLWGLVFNNSVPVQ) is pore-forming. Positions 601-615 (IGKAIWLLWGLVFNN) form an intramembrane region, discontinuously helical. The Cytoplasmic segment spans residues 616–625 (SVPVQNPKGT). A helical transmembrane segment spans residues 626–646 (TSKIMVSVWAFFAVIFLASYT). Over 647–814 (ANLAAFMIQE…NEVMSSQLDI (168 aa)) the chain is Extracellular. An N-linked (GlcNAc...) asparagine glycan is attached at Asn687. Residues Ser689, Thr690, and Asp731 each contribute to the L-glutamate site. Cys745 and Cys800 form a disulfide bridge. Residues 815 to 835 (DNMAGVFYMLAAAMALSLITF) traverse the membrane as a helical segment. The Cytoplasmic segment spans residues 836–1464 (IWEHLFYWKL…KKMPSIESDV (629 aa)). Residues Ser882, Ser890, and Ser929 each carry the phosphoserine modification. Composition is skewed to polar residues over residues 1001–1010 (STESKVNSRP) and 1023–1032 (QDSLSQNPVS). Disordered regions lie at residues 1001–1088 (STES…NFKR) and 1148–1180 (PDPY…GLSN). Residue Ser1025 is modified to Phosphoserine. Composition is skewed to basic and acidic residues over residues 1033 to 1043 (QRDEATAENRT) and 1052 to 1061 (LPEEMAHSDI). 2 positions are modified to phosphoserine: Ser1059 and Ser1062. Over residues 1070–1087 (CHREPDNSKNPKTKDNFK) the composition is skewed to basic and acidic residues. The span at 1165–1180 (LPMNRNPLQNEEGLSN) shows a compositional bias: polar residues. Residues Ser1198 and Ser1291 each carry the phosphoserine modification. The tract at residues 1335–1372 (KLSGKKSSLFPQGLEDSKRSKSLLPDHTSDNPFLHSHR) is disordered. The short motif at 1462–1464 (SDV) is the PDZ-binding element.

This sequence belongs to the glutamate-gated ion channel (TC 1.A.10.1) family. NR2A/GRIN2A subfamily. Heterotetramer. Forms heterotetrameric channels composed of two GluN1/zeta subunits (GRIN1), and two identical GluN2/epsilon subunits (GRIN2A, GRIN2B, GRIN2C or GRIN2D) or GluN3 subunits (GRIN3A or GRIN3B) (in vitro). Can also form heterotetrameric channels that contain at least two GluN1 subunits and at least two different GluN2 subunits (or a combination of one GluN2 and one GluN3 subunits) (in vitro). In vivo, the subunit composition may depend on the expression levels of the different subunits. Found in a complex with GRIN1, GRIN3A and PPP2CB. Found in a complex with GRIN1 and GRIN3B. Interacts with AIP1. Interacts with HIP1 and NETO1. Interacts with SNX27 (via PDZ domain); the interaction is required for recycling to the plasma membrane when endocytosed and prevent degradation in lysosomes. Interacts with PDZ domains of PATJ and DLG4. Interacts with LRFN2. Interacts with RPH3A and DLG4; this ternary complex regulates NMDA receptor composition at postsynaptic membranes. Interacts with SORCS2. Interacts with ARC; preventing ARC oligomerization. Interacts (via the extreme C-terminus) with FRMPD2 (the second PDZ domain); the interaction is direct and is likely to promote NMDAR-mediated neural signal transmission. GRIN2A binds FRMPD2 with lower affinity than GRIN2B.

Its subcellular location is the cell projection. It is found in the dendritic spine. It localises to the cell membrane. The protein resides in the synapse. The protein localises to the postsynaptic cell membrane. Its subcellular location is the cytoplasmic vesicle membrane. The enzyme catalyses Ca(2+)(in) = Ca(2+)(out). It carries out the reaction Na(+)(in) = Na(+)(out). It catalyses the reaction K(+)(in) = K(+)(out). In terms of biological role, component of N-methyl-D-aspartate (NMDA) receptors (NMDARs) that function as heterotetrameric, ligand-gated cation channels with high calcium permeability and voltage-dependent block by Mg(2+). NMDARs participate in synaptic plasticity for learning and memory formation by contributing to the slow phase of excitatory postsynaptic current, long-term synaptic potentiation, and learning. Channel activation requires binding of the neurotransmitter L-glutamate to the GluN2 subunit, glycine or D-serine binding to the GluN1 subunit, plus membrane depolarization to eliminate channel inhibition by Mg(2+). NMDARs mediate simultaneously the potasium efflux and the influx of calcium and sodium. Each GluN2 subunit confers differential attributes to channel properties, including activation, deactivation and desensitization kinetics, pH sensitivity, Ca2(+) permeability, and binding to allosteric modulators. Participates in the synaptic plasticity regulation through activation by the L-glutamate releaseed by BEST1, into the synaptic cleft, upon F2R/PAR-1 activation in astrocyte. In Pan troglodytes (Chimpanzee), this protein is Glutamate receptor ionotropic, NMDA 2A.